Here is a 1303-residue protein sequence, read N- to C-terminus: DNA-directed RNA polymerase subunit beta (1303 aa).

It belongs to the RNA polymerase beta chain family. As to quaternary structure, the RNAP catalytic core consists of 2 alpha, 1 beta, 1 beta' and 1 omega subunit. When a sigma factor is associated with the core the holoenzyme is formed, which can initiate transcription.

It catalyses the reaction RNA(n) + a ribonucleoside 5'-triphosphate = RNA(n+1) + diphosphate. Its function is as follows. DNA-dependent RNA polymerase catalyzes the transcription of DNA into RNA using the four ribonucleoside triphosphates as substrates. This is DNA-directed RNA polymerase subunit beta from Chlorobaculum tepidum (strain ATCC 49652 / DSM 12025 / NBRC 103806 / TLS) (Chlorobium tepidum).